Here is a 425-residue protein sequence, read N- to C-terminus: UDP-N-acetylglucosamine 1-carboxyvinyltransferase (425 aa).

23–24 (KN) is a phosphoenolpyruvate binding site. R100 is a binding site for UDP-N-acetyl-alpha-D-glucosamine. C124 acts as the Proton donor in catalysis. C124 is subject to 2-(S-cysteinyl)pyruvic acid O-phosphothioketal. UDP-N-acetyl-alpha-D-glucosamine contacts are provided by residues 169 to 172 (KVSV), D313, and V335.

The protein belongs to the EPSP synthase family. MurA subfamily.

It localises to the cytoplasm. The catalysed reaction is phosphoenolpyruvate + UDP-N-acetyl-alpha-D-glucosamine = UDP-N-acetyl-3-O-(1-carboxyvinyl)-alpha-D-glucosamine + phosphate. Its pathway is cell wall biogenesis; peptidoglycan biosynthesis. Cell wall formation. Adds enolpyruvyl to UDP-N-acetylglucosamine. This chain is UDP-N-acetylglucosamine 1-carboxyvinyltransferase, found in Wolbachia pipientis subsp. Culex pipiens (strain wPip).